Consider the following 159-residue polypeptide: H/ACA ribonucleoprotein complex subunit 2-like protein (159 aa).

Residues 1-28 form a disordered region; that stretch reads MAKTPKKDKTEEKEEHEESGGNKEDRER.

The protein belongs to the eukaryotic ribosomal protein eL8 family. As to quaternary structure, component of the small nucleolar ribonucleoprotein particle containing H/ACA-type snoRNAs (H/ACA snoRNPs). Component of the telomerase holoenzyme complex.

It is found in the nucleus. It localises to the nucleolus. Functionally, required for ribosome biogenesis. Part of a complex which catalyzes pseudouridylation of rRNA. This involves the isomerization of uridine such that the ribose is subsequently attached to C5, instead of the normal N1. Pseudouridine ('psi') residues may serve to stabilize the conformation of rRNAs. In Branchiostoma belcheri (Amphioxus), this protein is H/ACA ribonucleoprotein complex subunit 2-like protein.